Reading from the N-terminus, the 210-residue chain is Thiamine-phosphate synthase (210 aa).

4-amino-2-methyl-5-(diphosphooxymethyl)pyrimidine contacts are provided by residues 38-42 and N70; that span reads QLREK. 2 residues coordinate Mg(2+): D71 and D90. Position 109 (S109) interacts with 4-amino-2-methyl-5-(diphosphooxymethyl)pyrimidine. 139–141 is a binding site for 2-[(2R,5Z)-2-carboxy-4-methylthiazol-5(2H)-ylidene]ethyl phosphate; the sequence is TPT. K142 contributes to the 4-amino-2-methyl-5-(diphosphooxymethyl)pyrimidine binding site. 2-[(2R,5Z)-2-carboxy-4-methylthiazol-5(2H)-ylidene]ethyl phosphate is bound by residues G170 and 190–191; that span reads VS.

This sequence belongs to the thiamine-phosphate synthase family. Mg(2+) serves as cofactor.

The catalysed reaction is 2-[(2R,5Z)-2-carboxy-4-methylthiazol-5(2H)-ylidene]ethyl phosphate + 4-amino-2-methyl-5-(diphosphooxymethyl)pyrimidine + 2 H(+) = thiamine phosphate + CO2 + diphosphate. It catalyses the reaction 2-(2-carboxy-4-methylthiazol-5-yl)ethyl phosphate + 4-amino-2-methyl-5-(diphosphooxymethyl)pyrimidine + 2 H(+) = thiamine phosphate + CO2 + diphosphate. The enzyme catalyses 4-methyl-5-(2-phosphooxyethyl)-thiazole + 4-amino-2-methyl-5-(diphosphooxymethyl)pyrimidine + H(+) = thiamine phosphate + diphosphate. It participates in cofactor biosynthesis; thiamine diphosphate biosynthesis; thiamine phosphate from 4-amino-2-methyl-5-diphosphomethylpyrimidine and 4-methyl-5-(2-phosphoethyl)-thiazole: step 1/1. Its function is as follows. Condenses 4-methyl-5-(beta-hydroxyethyl)thiazole monophosphate (THZ-P) and 2-methyl-4-amino-5-hydroxymethyl pyrimidine pyrophosphate (HMP-PP) to form thiamine monophosphate (TMP). In Leptospira biflexa serovar Patoc (strain Patoc 1 / Ames), this protein is Thiamine-phosphate synthase.